Consider the following 395-residue polypeptide: Na(+)/H(+) antiporter NhaA (395 aa).

11 consecutive transmembrane segments (helical) span residues 11-31 (FAME…ALII), 61-81 (LLLW…GLEV), 96-116 (IVLP…IYWF), 127-147 (GWAI…ALLG), 156-176 (LFLM…IAIF), 179-199 (GTLS…LVAM), 202-222 (MGVV…VCVL), 264-284 (FGIL…GVTL), 295-315 (IAVG…WMAV), 331-351 (VLGV…VGSL), and 366-386 (MGIL…TAAA).

It belongs to the NhaA Na(+)/H(+) (TC 2.A.33) antiporter family.

Its subcellular location is the cell inner membrane. It catalyses the reaction Na(+)(in) + 2 H(+)(out) = Na(+)(out) + 2 H(+)(in). Its function is as follows. Na(+)/H(+) antiporter that extrudes sodium in exchange for external protons. The sequence is that of Na(+)/H(+) antiporter NhaA from Pseudomonas fluorescens (strain ATCC BAA-477 / NRRL B-23932 / Pf-5).